The primary structure comprises 407 residues: Cell division control protein 12 (407 aa).

Residue Ser2 is modified to N-acetylserine. The region spanning 31-314 (EGGTFTVMLC…ETYRRLRLEG (284 aa)) is the Septin-type G domain. Residues 41-48 (GESGLGKT) are G1 motif. GTP contacts are provided by residues 41–48 (GESGLGKT), Thr75, Gly101, 180–188 (KADTLTAQE), Gly247, and Arg263. Residues 98–101 (DTPG) are G3 motif. The interval 179-182 (AKAD) is G4 motif. A coiled-coil region spans residues 344–406 (EEENALKKYF…KSLQVKKSHL (63 aa)).

Belongs to the TRAFAC class TrmE-Era-EngA-EngB-Septin-like GTPase superfamily. Septin GTPase family. As to quaternary structure, component of the septin complex which consists of CDC3, CDC10, CDC11, CDC12 and probably SHS1 and rearranges to a cortical collar of highly ordered filaments at the mother-bud-neck. A complex formed by CDC3, CDC10, CDC11 and CDC12 is capable of forming long filaments in vitro and the components seem to be present in a 2:2:2:2 arrangement in vivo. The filaments are proposed to be formed by the end-to-end polymerization of CDC3-CDC12-CDC11 complexes with CDC10 serving as a bridge to bundle the polymers into paired filaments. Component of the GIN4 complex composed of at least BNI5, CDC3, CDC10, CDC11, CDC12, GIN4, NAP1 and SHS1. Self-associates. Interacts with SYP1.

The protein resides in the membrane. Its subcellular location is the bud neck. In terms of biological role, septins are GTPases involved in cytokinesis that assemble early in the cell cycle as a patch at the incipient bud site and form a ring approximate 15 minutes before bud emergence, which transforms into an hour-glass shaped collar of cortical filaments that spans both sides of the mother-bud neck. This collar persists until just before cytokinesis, when it splits into two rings that occupy opposite sides of the neck. The septins at the bud neck serve as a structural scaffold that recruits different components involved in diverse processes at specific stages during the cell cycle. Many proteins bind asymmetrically to the septin collar. The septin assembly is regulated by protein kinases GIN4 and/or CLA4. May act by recruiting MYO1 and HOF1, a protein involved in septation, to the site of cleavage. Septins are also involved in cell morphogenesis, bud site selection, chitin deposition, cell cycle regulation, cell compartmentalization and spore wall formation. The chain is Cell division control protein 12 (CDC12) from Saccharomyces cerevisiae (strain ATCC 204508 / S288c) (Baker's yeast).